A 297-amino-acid polypeptide reads, in one-letter code: N-acetylneuraminate lyase (297 aa).

Aceneuramate contacts are provided by S47 and T48. Catalysis depends on Y137, which acts as the Proton donor. The active-site Schiff-base intermediate with substrate is the K165. T167, G189, D191, E192, and S208 together coordinate aceneuramate.

This sequence belongs to the DapA family. NanA subfamily. Homotetramer.

It localises to the cytoplasm. The catalysed reaction is aceneuramate = aldehydo-N-acetyl-D-mannosamine + pyruvate. It participates in amino-sugar metabolism; N-acetylneuraminate degradation; D-fructose 6-phosphate from N-acetylneuraminate: step 1/5. Its function is as follows. Catalyzes the reversible aldol cleavage of N-acetylneuraminic acid (sialic acid; Neu5Ac) to form pyruvate and N-acetylmannosamine (ManNAc) via a Schiff base intermediate. The protein is N-acetylneuraminate lyase of Escherichia coli (strain SE11).